The following is a 152-amino-acid chain: SUZ RNA-binding domain-containing (152 aa).

At M1 the chain carries N-acetylmethionine. Residues 30–152 are disordered; the sequence is TQKESRKSKS…DGSQGFKQRR (123 aa). Residues S37, S39, and S51 each carry the phosphoserine modification. Positions 42–107 constitute an SUZ domain; it reads KVPIVIQDDS…ARKRILGSAS (66 aa). Residues 66–81 show a composition bias toward polar residues; the sequence is PTSNGVVSSPNSTSRP. Over residues 89–100 the composition is skewed to basic and acidic residues; that stretch reads AQREAEYAEARK. A phosphoserine mark is found at S105 and S107. The SUZ-C domain occupies 111–152; it reads EQEKPILDRPTRISQPEDSRQPNNVIRQPLGPDGSQGFKQRR. Residues 113-130 show a composition bias toward basic and acidic residues; sequence EKPILDRPTRISQPEDSR.

The protein belongs to the SZRD1 family.

The protein is SUZ RNA-binding domain-containing (SZRD1) of Homo sapiens (Human).